The following is a 312-amino-acid chain: MIVEVFFRNYYRNYAKLEVDEVEKREFAFQPFVGGMVRHKAFKNLEELKRHLVEKTPRHVYYSTARYERPWEEDMERKGWLGADLVFDIDGDHLDTEACRESKVVSLACLEDAKEEANKLIDVLTEELGLKPTKVVFSGNRGFHVHVVDEEVLALGQKERRELVNYLKAVGFDPSKFHMKVGRRKVVLYEEEAVGNLLRIRRGIEDPEALKVEVDEVVTQDVHRLIRAPGSLNGKTGLVALPLSVRDLEKEVAHIVERAIAFRKGNLRLRFEKPFQGTVLFEKVEAREGDIKTLPAHVAIYLELQEFGKIYD.

Active-site residues include Asp88, Asp90, and Asp215.

The protein belongs to the eukaryotic-type primase small subunit family. As to quaternary structure, heterodimer of a small subunit (PriS) and a large subunit (PriL). Mg(2+) serves as cofactor. It depends on Mn(2+) as a cofactor.

In terms of biological role, catalytic subunit of DNA primase, an RNA polymerase that catalyzes the synthesis of short RNA molecules used as primers for DNA polymerase during DNA replication. The small subunit contains the primase catalytic core and has DNA synthesis activity on its own. Binding to the large subunit stabilizes and modulates the activity, increasing the rate of DNA synthesis while decreasing the length of the DNA fragments, and conferring RNA synthesis capability. The DNA polymerase activity may enable DNA primase to also catalyze primer extension after primer synthesis. May also play a role in DNA repair. The sequence is that of DNA primase small subunit PriS from Pyrobaculum calidifontis (strain DSM 21063 / JCM 11548 / VA1).